We begin with the raw amino-acid sequence, 417 residues long: Tryptophan synthase beta chain (417 aa).

N6-(pyridoxal phosphate)lysine is present on Lys108.

Belongs to the TrpB family. As to quaternary structure, tetramer of two alpha and two beta chains. Pyridoxal 5'-phosphate serves as cofactor.

The catalysed reaction is (1S,2R)-1-C-(indol-3-yl)glycerol 3-phosphate + L-serine = D-glyceraldehyde 3-phosphate + L-tryptophan + H2O. The protein operates within amino-acid biosynthesis; L-tryptophan biosynthesis; L-tryptophan from chorismate: step 5/5. Its function is as follows. The beta subunit is responsible for the synthesis of L-tryptophan from indole and L-serine. The sequence is that of Tryptophan synthase beta chain (trpB) from Mycobacterium leprae (strain TN).